The sequence spans 284 residues: Bifunctional protein FolD (284 aa).

NADP(+)-binding positions include 164–166 (GRG), serine 189, and isoleucine 230.

This sequence belongs to the tetrahydrofolate dehydrogenase/cyclohydrolase family. As to quaternary structure, homodimer.

The enzyme catalyses (6R)-5,10-methylene-5,6,7,8-tetrahydrofolate + NADP(+) = (6R)-5,10-methenyltetrahydrofolate + NADPH. It carries out the reaction (6R)-5,10-methenyltetrahydrofolate + H2O = (6R)-10-formyltetrahydrofolate + H(+). It participates in one-carbon metabolism; tetrahydrofolate interconversion. In terms of biological role, catalyzes the oxidation of 5,10-methylenetetrahydrofolate to 5,10-methenyltetrahydrofolate and then the hydrolysis of 5,10-methenyltetrahydrofolate to 10-formyltetrahydrofolate. The chain is Bifunctional protein FolD from Desulforamulus reducens (strain ATCC BAA-1160 / DSM 100696 / MI-1) (Desulfotomaculum reducens).